We begin with the raw amino-acid sequence, 438 residues long: 26S proteasome regulatory subunit 6A (438 aa).

The tract at residues 1–24 is disordered; sequence MSTLEELDALDQSQQGGSSNNEGL. The span at 11 to 22 shows a compositional bias: polar residues; it reads DQSQQGGSSNNE. 226-233 lines the ATP pocket; it reads GPPGTGKT.

The protein belongs to the AAA ATPase family.

Its subcellular location is the cytoplasm. It is found in the nucleus. The 26S proteasome is involved in the ATP-dependent degradation of ubiquitinated proteins. The regulatory (or ATPase) complex confers ATP dependency and substrate specificity to the 26S complex. This Schizosaccharomyces pombe (strain 972 / ATCC 24843) (Fission yeast) protein is 26S proteasome regulatory subunit 6A (tbp1).